The chain runs to 115 residues: Non-specific lipid-transfer protein (115 aa).

The N-terminal stretch at 1-24 (MASSAVTKLALVVALCMAVSVAHA) is a signal peptide. 4 disulfides stabilise this stretch: Cys27–Cys74, Cys37–Cys51, Cys52–Cys97, and Cys72–Cys111.

This sequence belongs to the plant LTP family.

Plant non-specific lipid-transfer proteins transfer phospholipids as well as galactolipids across membranes. May play a role in wax or cutin deposition in the cell walls of expanding epidermal cells and certain secretory tissues. This Malus domestica (Apple) protein is Non-specific lipid-transfer protein (MALD3).